The chain runs to 396 residues: ATP synthase subunit beta, chloroplastic (396 aa).

An ATP-binding site is contributed by 74–81; that stretch reads GGAGVGKT.

It belongs to the ATPase alpha/beta chains family. F-type ATPases have 2 components, CF(1) - the catalytic core - and CF(0) - the membrane proton channel. CF(1) has five subunits: alpha(3), beta(3), gamma(1), delta(1), epsilon(1). CF(0) has four main subunits: a(1), b(1), b'(1) and c(9-12).

Its subcellular location is the plastid. It is found in the chloroplast thylakoid membrane. The enzyme catalyses ATP + H2O + 4 H(+)(in) = ADP + phosphate + 5 H(+)(out). Produces ATP from ADP in the presence of a proton gradient across the membrane. The catalytic sites are hosted primarily by the beta subunits. This is ATP synthase subunit beta, chloroplastic from Adiantum raddianum (Maidenhair fern).